We begin with the raw amino-acid sequence, 442 residues long: tRNA-2-methylthio-N(6)-dimethylallyladenosine synthase (442 aa).

The MTTase N-terminal domain occupies 2–117 (KSLYIKTYGC…LPELIVKASR (116 aa)). Cys-11, Cys-47, Cys-80, Cys-157, Cys-161, and Cys-164 together coordinate [4Fe-4S] cluster. Residues 143–374 (NSQGSSAFLS…QKLINKQQLE (232 aa)) enclose the Radical SAM core domain. One can recognise a TRAM domain in the interval 377–441 (QSMVGKTIPV…QNSLLGRELQ (65 aa)).

It belongs to the methylthiotransferase family. MiaB subfamily. In terms of assembly, monomer. [4Fe-4S] cluster serves as cofactor.

The protein localises to the cytoplasm. The enzyme catalyses N(6)-dimethylallyladenosine(37) in tRNA + (sulfur carrier)-SH + AH2 + 2 S-adenosyl-L-methionine = 2-methylsulfanyl-N(6)-dimethylallyladenosine(37) in tRNA + (sulfur carrier)-H + 5'-deoxyadenosine + L-methionine + A + S-adenosyl-L-homocysteine + 2 H(+). Its function is as follows. Catalyzes the methylthiolation of N6-(dimethylallyl)adenosine (i(6)A), leading to the formation of 2-methylthio-N6-(dimethylallyl)adenosine (ms(2)i(6)A) at position 37 in tRNAs that read codons beginning with uridine. This is tRNA-2-methylthio-N(6)-dimethylallyladenosine synthase from Wolbachia sp. subsp. Brugia malayi (strain TRS).